Reading from the N-terminus, the 365-residue chain is Uroporphyrinogen decarboxylase (365 aa).

Substrate-binding positions include 27 to 31 (RQAGR), Asp77, Tyr154, Ser209, and His327.

This sequence belongs to the uroporphyrinogen decarboxylase family. As to quaternary structure, homodimer.

The protein resides in the cytoplasm. It catalyses the reaction uroporphyrinogen III + 4 H(+) = coproporphyrinogen III + 4 CO2. Its pathway is porphyrin-containing compound metabolism; protoporphyrin-IX biosynthesis; coproporphyrinogen-III from 5-aminolevulinate: step 4/4. Functionally, catalyzes the decarboxylation of four acetate groups of uroporphyrinogen-III to yield coproporphyrinogen-III. The protein is Uroporphyrinogen decarboxylase of Alkalilimnicola ehrlichii (strain ATCC BAA-1101 / DSM 17681 / MLHE-1).